The primary structure comprises 501 residues: Ell-associated factor Eaf (501 aa).

Polar residues-rich tracts occupy residues 138–149 (NMGQGQLHSQGA) and 173–192 (ENST…SRRN). 2 disordered regions span residues 138–226 (NMGQ…PAWD) and 256–501 (GHAN…DDDD). Low complexity-rich tracts occupy residues 200–221 (RNSP…SPQS) and 256–270 (GHAN…SATG). Ser-202 carries the phosphoserine modification. The span at 271–283 (QTDFGSISSSSHI) shows a compositional bias: polar residues. Low complexity-rich tracts occupy residues 302 to 314 (QRQS…QQQP) and 329 to 343 (QQQR…QRPP). The span at 393-408 (DSSDSDSGSDSDDSTE) shows a compositional bias: acidic residues. Composition is skewed to low complexity over residues 416–437 (QQPV…HLNQ), 455–471 (QQQQ…QKQQ), and 483–501 (NDLL…DDDD).

Belongs to the EAF family.

Its subcellular location is the nucleus. Functionally, promotes transcriptional elongation by Su(Tpl)/ELL. Essential for development. The protein is Ell-associated factor Eaf of Drosophila yakuba (Fruit fly).